The chain runs to 202 residues: LexA repressor (202 aa).

The H-T-H motif DNA-binding region spans 28–48 (RAEIAQRLGFRSPNAAEEHLK). Catalysis depends on for autocatalytic cleavage activity residues Ser119 and Lys156.

It belongs to the peptidase S24 family. In terms of assembly, homodimer.

It catalyses the reaction Hydrolysis of Ala-|-Gly bond in repressor LexA.. In terms of biological role, represses a number of genes involved in the response to DNA damage (SOS response), including recA and lexA. Binds to the 16 bp palindromic sequence 5'-CTGTATATATATACAG-3'. In the presence of single-stranded DNA, RecA interacts with LexA causing an autocatalytic cleavage which disrupts the DNA-binding part of LexA, leading to derepression of the SOS regulon and eventually DNA repair. This chain is LexA repressor, found in Yersinia pseudotuberculosis serotype O:1b (strain IP 31758).